The primary structure comprises 366 residues: Phenylalanine dehydrogenase (366 aa).

Residue Arg45 coordinates NAD(+). Lys69 is an L-phenylalanine binding site. Lys81 is a catalytic residue. Residues Asp116, Thr151, 181-187 (GVGKVGE), 204-205 (DI), 241-242 (AK), and 262-264 (SAN) each bind NAD(+). Asn264 contacts L-phenylalanine.

The protein belongs to the Glu/Leu/Phe/Val dehydrogenases family.

The catalysed reaction is L-phenylalanine + NAD(+) + H2O = 3-phenylpyruvate + NH4(+) + NADH + H(+). Its pathway is amino-acid biosynthesis; L-phenylalanine biosynthesis; L-phenylalanine from phenylpyruvate (PDH route): step 1/1. In terms of biological role, catalyzes the reversible NAD(+)-dependent oxidative deamination of L-phenylalanine to phenylpyruvate. The chain is Phenylalanine dehydrogenase from Thermoactinomyces intermedius.